The chain runs to 329 residues: 4-hydroxythreonine-4-phosphate dehydrogenase (329 aa).

Substrate-binding residues include histidine 136 and threonine 137. Histidine 166, histidine 211, and histidine 266 together coordinate a divalent metal cation. Lysine 274, asparagine 283, and arginine 292 together coordinate substrate.

The protein belongs to the PdxA family. Homodimer. Zn(2+) is required as a cofactor. It depends on Mg(2+) as a cofactor. The cofactor is Co(2+).

It is found in the cytoplasm. The enzyme catalyses 4-(phosphooxy)-L-threonine + NAD(+) = 3-amino-2-oxopropyl phosphate + CO2 + NADH. Its pathway is cofactor biosynthesis; pyridoxine 5'-phosphate biosynthesis; pyridoxine 5'-phosphate from D-erythrose 4-phosphate: step 4/5. Its function is as follows. Catalyzes the NAD(P)-dependent oxidation of 4-(phosphooxy)-L-threonine (HTP) into 2-amino-3-oxo-4-(phosphooxy)butyric acid which spontaneously decarboxylates to form 3-amino-2-oxopropyl phosphate (AHAP). This is 4-hydroxythreonine-4-phosphate dehydrogenase from Escherichia fergusonii (strain ATCC 35469 / DSM 13698 / CCUG 18766 / IAM 14443 / JCM 21226 / LMG 7866 / NBRC 102419 / NCTC 12128 / CDC 0568-73).